The chain runs to 220 residues: Metalloproteinase inhibitor 2 (220 aa).

The N-terminal stretch at 1–26 (MGAAARSLRLALGLLLLATLPRPADA) is a signal peptide. C27 serves as a coordination point for Zn(2+). 2 involved in metalloproteinase-binding regions span residues 27–30 (CSCS) and 95–96 (SA). 6 disulfides stabilise this stretch: C27–C98, C29–C127, C39–C152, C154–C201, C159–C164, and C172–C193. In terms of domain architecture, NTR spans 27–152 (CSCSPVHPQQ…SLNHRYQMGC (126 aa)).

The protein belongs to the protease inhibitor I35 (TIMP) family. In terms of assembly, interacts (via the C-terminal) with MMP2 (via the C-terminal PEX domain); the interaction inhibits the MMP2 activity. The activity of TIMP2 is dependent on the presence of disulfide bonds.

It is found in the secreted. In terms of biological role, complexes with metalloproteinases (such as collagenases) and irreversibly inactivates them by binding to their catalytic zinc cofactor. This chain is Metalloproteinase inhibitor 2 (TIMP2), found in Canis lupus familiaris (Dog).